A 369-amino-acid polypeptide reads, in one-letter code: Glutamate 5-kinase (369 aa).

Residue Lys10 participates in ATP binding. The substrate site is built by Ser50, Asp137, and Asn149. Residues 169–170 (TD) and 210–216 (TGGMVTK) contribute to the ATP site. Residues 276 to 349 (EGSIFIDEGA…GKHSEEMLAT (74 aa)) enclose the PUA domain.

Belongs to the glutamate 5-kinase family.

The protein resides in the cytoplasm. The enzyme catalyses L-glutamate + ATP = L-glutamyl 5-phosphate + ADP. The protein operates within amino-acid biosynthesis; L-proline biosynthesis; L-glutamate 5-semialdehyde from L-glutamate: step 1/2. Functionally, catalyzes the transfer of a phosphate group to glutamate to form L-glutamate 5-phosphate. The protein is Glutamate 5-kinase of Desulfitobacterium hafniense (strain Y51).